A 111-amino-acid chain; its full sequence is Nucleoid-associated protein PFL_1905 (111 aa).

Disordered regions lie at residues 1–20 (MKGG…EKMA) and 88–111 (SNSQ…KLPF).

This sequence belongs to the YbaB/EbfC family. As to quaternary structure, homodimer.

It localises to the cytoplasm. The protein localises to the nucleoid. Binds to DNA and alters its conformation. May be involved in regulation of gene expression, nucleoid organization and DNA protection. This is Nucleoid-associated protein PFL_1905 from Pseudomonas fluorescens (strain ATCC BAA-477 / NRRL B-23932 / Pf-5).